We begin with the raw amino-acid sequence, 458 residues long: Methionine aminopeptidase 2-2 (458 aa).

Over residues 1–14 the composition is skewed to basic and acidic residues; sequence MGSKTPERDGHKGQ. The segment at 1 to 93 is disordered; it reads MGSKTPERDG…QSSPPRVPLS (93 aa). Basic residues predominate over residues 67-82; it reads QKKKRKSKKKGKKKAA. His209 contacts substrate. Asp230, Asp241, and His310 together coordinate a divalent metal cation. His318 is a binding site for substrate. Residues Glu343 and Glu439 each contribute to the a divalent metal cation site.

The protein belongs to the peptidase M24A family. Methionine aminopeptidase eukaryotic type 2 subfamily. It depends on Co(2+) as a cofactor. Requires Zn(2+) as cofactor. Mn(2+) is required as a cofactor. The cofactor is Fe(2+).

The protein resides in the cytoplasm. The enzyme catalyses Release of N-terminal amino acids, preferentially methionine, from peptides and arylamides.. Functionally, cotranslationally removes the N-terminal methionine from nascent proteins. The N-terminal methionine is often cleaved when the second residue in the primary sequence is small and uncharged (Met-Ala-, Cys, Gly, Pro, Ser, Thr, or Val). This is Methionine aminopeptidase 2-2 from Emericella nidulans (strain FGSC A4 / ATCC 38163 / CBS 112.46 / NRRL 194 / M139) (Aspergillus nidulans).